A 317-amino-acid chain; its full sequence is 3'-5' exoribonuclease YhaM (317 aa).

The segment at residues 17–90 (FLLIKESTRG…QLKILSIRLS (74 aa)) is a DNA-binding region (OB). The HD domain maps to 163–279 (HVVSMLAIGK…LHLIDLIDAK (117 aa)).

This sequence belongs to the YhaM family.

Its function is as follows. Shows a 3'-5' exoribonuclease activity. This Oceanobacillus iheyensis (strain DSM 14371 / CIP 107618 / JCM 11309 / KCTC 3954 / HTE831) protein is 3'-5' exoribonuclease YhaM.